Here is a 693-residue protein sequence, read N- to C-terminus: Protein-glutamine gamma-glutamyltransferase E (693 aa).

Residue Y111 is modified to Phosphotyrosine. A Phosphothreonine modification is found at T112. 5 residues coordinate Ca(2+): A222, N225, N227, D228, and N230. C273 is a catalytic residue. Ca(2+) is bound by residues D302, D304, N306, S308, and D325. Catalysis depends on residues H331 and D354. Ca(2+)-binding residues include N394, T416, E444, and E449. The disordered stretch occupies residues L457–I483.

Belongs to the transglutaminase superfamily. Transglutaminase family. As to quaternary structure, consists of two polypeptide chains, which are synthesized as a precursor form of a single polypeptide. It depends on Ca(2+) as a cofactor. In terms of processing, activated by proteolytic processing. In vitro activation is commonly achieved by cleavage with dispase, a neutral bacterial protease. Physiological activation may be catalyzed by CTSL and, to a lesser extent, by CTSS. As to expression, expressed in skin and stomach and, at lower levels, in testis, kidney and spleen (at protein level). On the basis of its catalytic activity, detected in the epidermis, around the granular and spinous layers but not in the outermost cornified layers. In hair follicles, mainly located in the medulla and the hair cortex.

Its subcellular location is the cytoplasm. It catalyses the reaction L-glutaminyl-[protein] + L-lysyl-[protein] = [protein]-L-lysyl-N(6)-5-L-glutamyl-[protein] + NH4(+). In terms of biological role, catalyzes the calcium-dependent formation of isopeptide cross-links between glutamine and lysine residues in various proteins, as well as the conjugation of polyamines to proteins. Involved in the formation of the cornified envelope (CE), a specialized component consisting of covalent cross-links of proteins beneath the plasma membrane of terminally differentiated keratinocytes. Catalyzes small proline-rich proteins (SPRR1 and SPRR2) and LOR cross-linking to form small interchain oligomers, which are further cross-linked by TGM1 onto the growing CE scaffold. In hair follicles, involved in cross-linking structural proteins to hardening the inner root sheath. This chain is Protein-glutamine gamma-glutamyltransferase E (Tgm3), found in Mus musculus (Mouse).